The sequence spans 321 residues: Peptide transport system permease protein SapB (321 aa).

At Met-1–Arg-8 the chain is on the cytoplasmic side. A helical membrane pass occupies residues Leu-9 to Phe-29. Topologically, residues Thr-30 to Leu-80 are periplasmic. Residues Phe-74 to Ser-302 enclose the ABC transmembrane type-1 domain. A helical transmembrane segment spans residues Cys-81–Val-101. Residues Thr-102 to Ala-113 are Cytoplasmic-facing. The helical transmembrane segment at Leu-114–Phe-134 threads the bilayer. Topologically, residues Ser-135–Glu-174 are periplasmic. A helical transmembrane segment spans residues Met-175–Thr-195. The Cytoplasmic portion of the chain corresponds to Thr-196 to Gln-248. The helical transmembrane segment at Phe-249–Gly-269 threads the bilayer. Residues Arg-270–Asp-280 are Periplasmic-facing. Residues Tyr-281–Ile-301 traverse the membrane as a helical segment. Residues Ser-302 to Arg-321 are Cytoplasmic-facing.

This sequence belongs to the binding-protein-dependent transport system permease family. OppBC subfamily.

The protein localises to the cell inner membrane. Its function is as follows. Involved in a peptide intake transport system that plays a role in the resistance to antimicrobial peptides. This chain is Peptide transport system permease protein SapB, found in Salmonella typhimurium (strain LT2 / SGSC1412 / ATCC 700720).